The following is a 117-amino-acid chain: Large ribosomal subunit protein bL20 (117 aa).

Belongs to the bacterial ribosomal protein bL20 family.

Functionally, binds directly to 23S ribosomal RNA and is necessary for the in vitro assembly process of the 50S ribosomal subunit. It is not involved in the protein synthesizing functions of that subunit. The chain is Large ribosomal subunit protein bL20 from Finegoldia magna (strain ATCC 29328 / DSM 20472 / WAL 2508) (Peptostreptococcus magnus).